Reading from the N-terminus, the 129-residue chain is Small ribosomal subunit protein uS12 (129 aa).

Asp-89 is subject to 3-methylthioaspartic acid. The tract at residues 110-129 (RKQGRSRYGAPRKQVVATKK) is disordered.

It belongs to the universal ribosomal protein uS12 family. As to quaternary structure, part of the 30S ribosomal subunit. Contacts proteins S8 and S17. May interact with IF1 in the 30S initiation complex.

With S4 and S5 plays an important role in translational accuracy. Functionally, interacts with and stabilizes bases of the 16S rRNA that are involved in tRNA selection in the A site and with the mRNA backbone. Located at the interface of the 30S and 50S subunits, it traverses the body of the 30S subunit contacting proteins on the other side and probably holding the rRNA structure together. The combined cluster of proteins S8, S12 and S17 appears to hold together the shoulder and platform of the 30S subunit. The polypeptide is Small ribosomal subunit protein uS12 (Rickettsia bellii (strain RML369-C)).